A 532-amino-acid polypeptide reads, in one-letter code: All-trans-retinyl ester 13-cis isomerohydrolase (532 aa).

Cysteine 112 carries S-palmitoyl cysteine; in membrane form lipidation. Residues histidine 180, histidine 241, and histidine 313 each coordinate Fe cation. A lipid anchor (S-palmitoyl cysteine; in membrane form) is attached at cysteine 329. Histidine 527 serves as a coordination point for Fe cation.

The protein belongs to the carotenoid oxygenase family. Fe(2+) serves as cofactor. In terms of processing, palmitoylated. Predominantly expressed in brain. Expressed at a low level in the eye.

It is found in the cytoplasm. Its subcellular location is the cell membrane. It carries out the reaction an all-trans-retinyl ester + H2O = 13-cis-retinol + a fatty acid + H(+). It catalyses the reaction lutein = (3R,3'S)-zeaxanthin. Specifically generates 13-cis retinol, a stereoisomeric form of retinoic acid. Capable of catalyzing the isomerization of lutein to meso-zeaxanthin an eye-specific carotenoid. The protein is All-trans-retinyl ester 13-cis isomerohydrolase (rpe65b) of Danio rerio (Zebrafish).